Consider the following 55-residue polypeptide: Large ribosomal subunit protein bL33 (55 aa).

Belongs to the bacterial ribosomal protein bL33 family.

The protein is Large ribosomal subunit protein bL33 of Baumannia cicadellinicola subsp. Homalodisca coagulata.